The primary structure comprises 294 residues: Shikimate dehydrogenase (NADP(+)) (294 aa).

Shikimate-binding positions include 22-24 (SLS) and Ser-69. Catalysis depends on Lys-73, which acts as the Proton acceptor. Shikimate is bound by residues Asn-94 and Asp-111. NADP(+) contacts are provided by residues 135 to 139 (GAGGA) and Leu-236. Tyr-238 contributes to the shikimate binding site. Gly-260 contacts NADP(+).

This sequence belongs to the shikimate dehydrogenase family. As to quaternary structure, homodimer.

It carries out the reaction shikimate + NADP(+) = 3-dehydroshikimate + NADPH + H(+). It functions in the pathway metabolic intermediate biosynthesis; chorismate biosynthesis; chorismate from D-erythrose 4-phosphate and phosphoenolpyruvate: step 4/7. Involved in the biosynthesis of the chorismate, which leads to the biosynthesis of aromatic amino acids. Catalyzes the reversible NADPH linked reduction of 3-dehydroshikimate (DHSA) to yield shikimate (SA). The polypeptide is Shikimate dehydrogenase (NADP(+)) (Streptococcus equi subsp. zooepidemicus (strain MGCS10565)).